The sequence spans 239 residues: 6-phosphogluconolactonase (239 aa).

Belongs to the glucosamine/galactosamine-6-phosphate isomerase family. 6-phosphogluconolactonase subfamily.

It carries out the reaction 6-phospho-D-glucono-1,5-lactone + H2O = 6-phospho-D-gluconate + H(+). It functions in the pathway carbohydrate degradation; pentose phosphate pathway; D-ribulose 5-phosphate from D-glucose 6-phosphate (oxidative stage): step 2/3. Functionally, hydrolysis of 6-phosphogluconolactone to 6-phosphogluconate. The chain is 6-phosphogluconolactonase (pgl) from Xylella fastidiosa (strain 9a5c).